The primary structure comprises 892 residues: Alanine--tRNA ligase (892 aa).

Zn(2+)-binding residues include histidine 577, histidine 581, cysteine 680, and histidine 684.

The protein belongs to the class-II aminoacyl-tRNA synthetase family. Zn(2+) serves as cofactor.

It localises to the cytoplasm. It catalyses the reaction tRNA(Ala) + L-alanine + ATP = L-alanyl-tRNA(Ala) + AMP + diphosphate. Functionally, catalyzes the attachment of alanine to tRNA(Ala) in a two-step reaction: alanine is first activated by ATP to form Ala-AMP and then transferred to the acceptor end of tRNA(Ala). Also edits incorrectly charged Ser-tRNA(Ala) and Gly-tRNA(Ala) via its editing domain. The chain is Alanine--tRNA ligase from Paenarthrobacter aurescens (strain TC1).